Consider the following 287-residue polypeptide: Protein HEXIM2 (287 aa).

Disordered regions lie at residues 1–212 (MKDW…RSKE) and 266–287 (RLRQ…QPGS). Ser-31 bears the Phosphoserine mark. 2 positions are modified to phosphothreonine: Thr-34 and Thr-48. 5 positions are modified to phosphoserine: Ser-53, Ser-55, Ser-73, Ser-78, and Ser-83. Residues 89–105 (ARKKHRRRPSKRKRHWR) show a composition bias toward basic residues. A compositionally biased stretch (basic and acidic residues) spans 115 to 134 (KQQRDERQSQRASRVREEMF). An interaction with P-TEFb region spans residues 142-145 (PYNT). 2 stretches are compositionally biased toward basic and acidic residues: residues 181–212 (GQGR…RSKE) and 266–280 (RLRQ…EGGR). A coiled-coil region spans residues 208 to 278 (GRSKEELVRD…QENEMWNREG (71 aa)). The tract at residues 227–287 (QAEEEMRRLR…GGRRGGQPGS (61 aa)) is interaction with CCNT1, HEXIM1 and HEXIM2.

This sequence belongs to the HEXIM family. Homooligomer and heterooligomer with HEXIM1; probably dimeric. Core component of the 7SK RNP complex, at least composed of 7SK RNA, LARP7, MEPCE, HEXIM1 (or HEXIM2) and P-TEFb (composed of CDK9 and CCNT1/cyclin-T1). Interacts with CCNT2.

The protein resides in the nucleus. Functionally, transcriptional regulator which functions as a general RNA polymerase II transcription inhibitor. Core component of the 7SK RNP complex: in cooperation with 7SK snRNA sequesters P-TEFb in a large inactive 7SK snRNP complex preventing RNA polymerase II phosphorylation and subsequent transcriptional elongation. This Bos taurus (Bovine) protein is Protein HEXIM2 (HEXIM2).